The chain runs to 663 residues: Translation factor GUF1, mitochondrial (663 aa).

The transit peptide at 1–37 (MRGCLQSVRLLTTALGQSPRRPLPFAFRLPPNASRLF) directs the protein to the mitochondrion. The tr-type G domain maps to 65 to 245 (ERYRNFCIVA…TIVEQIPAPI (181 aa)). GTP-binding positions include 74 to 81 (AHVDHGKS), 138 to 142 (DTPGH), and 192 to 195 (NKVD).

This sequence belongs to the TRAFAC class translation factor GTPase superfamily. Classic translation factor GTPase family. LepA subfamily.

Its subcellular location is the mitochondrion inner membrane. It carries out the reaction GTP + H2O = GDP + phosphate + H(+). Its function is as follows. Promotes mitochondrial protein synthesis. May act as a fidelity factor of the translation reaction, by catalyzing a one-codon backward translocation of tRNAs on improperly translocated ribosomes. Binds to mitochondrial ribosomes in a GTP-dependent manner. The sequence is that of Translation factor GUF1, mitochondrial from Uncinocarpus reesii (strain UAMH 1704).